The primary structure comprises 193 residues: Transmembrane protein 066L (193 aa).

The next 2 membrane-spanning stretches (helical) occupy residues 14 to 34 and 48 to 68; these read VLFA…GLVW and LVVE…LVVV.

The protein belongs to the IIV-6 357R family.

The protein localises to the membrane. The chain is Transmembrane protein 066L from Invertebrate iridescent virus 3 (IIV-3).